The following is a 469-amino-acid chain: MSSRSDLKIKRVSLIIFLLSVLVEFCYGGFTSEYVRGSDLPDDMPLDSDVFEVPPGPNSPQQVHVTQGNHEGNGVIISWVTPVKPGSKTVQYWCENEKSRKQAEATVNTYRFFNYTSGYIHHCLIDDLEFDTKYYYEIGSGKWSRRFWFFIPPKSGPDVPYTFGLIGDLGQTYDSNSTLSHYEMNPGKGQAVLFVGDLSYADRYPNHDNNRWDTWGRFVERSVAYQPWIWTAGNHEIDFVPDIGEIEPFKPFMNRYHTPHKASGSISPLWYSIKRASAYIIVMSCYSSYGIYTPQYKWLEKELQGVNRTETPWLIVLVHSPFYSSYVHHYMEGETLRVMYEQWFVKYKVDVVFAGHVHAYERSERVSNIAYNIVNGLCEPISDESAPIYITIGDGGNSEGLLTDMMQPQPKYSAFREASFGHGLLEIKNRTHAYFSWNRNQDGNAVAADSVWLLNRFWRAQKKTWLDAF.

A signal peptide spans 1–28 (MSSRSDLKIKRVSLIIFLLSVLVEFCYG). A glycan (N-linked (GlcNAc...) asparagine) is linked at asparagine 114. Aspartate 168 lines the Fe cation pocket. N-linked (GlcNAc...) asparagine glycosylation occurs at asparagine 176. Fe cation contacts are provided by aspartate 197 and tyrosine 200. Aspartate 197 contributes to the Zn(2+) binding site. Asparagine 234 is a binding site for Zn(2+). Substrate is bound at residue asparagine 234. N-linked (GlcNAc...) asparagine glycosylation occurs at asparagine 307. Histidine 319 lines the Zn(2+) pocket. Catalysis depends on histidine 329, which acts as the Proton donor. Residue histidine 356 coordinates Zn(2+). 356–358 (HVH) provides a ligand contact to substrate. Histidine 358 serves as a coordination point for Fe cation. A glycan (N-linked (GlcNAc...) asparagine) is linked at asparagine 429.

This sequence belongs to the metallophosphoesterase superfamily. Purple acid phosphatase family. In terms of assembly, homodimer; disulfide-linked. Fe cation serves as cofactor. Requires Zn(2+) as cofactor. In terms of tissue distribution, expressed in roots, stems, leaves, flowers and siliques.

Its subcellular location is the secreted. It carries out the reaction a phosphate monoester + H2O = an alcohol + phosphate. The protein is Fe(3+)-Zn(2+) purple acid phosphatase 12 (PAP12) of Arabidopsis thaliana (Mouse-ear cress).